We begin with the raw amino-acid sequence, 90 residues long: uncharacterized protein (90 aa).

The protein localises to the cytoplasm. This is an uncharacterized protein from Saccharomyces cerevisiae (strain ATCC 204508 / S288c) (Baker's yeast).